We begin with the raw amino-acid sequence, 2272 residues long: Voltage-dependent R-type calcium channel subunit alpha-1E (2272 aa).

A disordered region spans residues 1–40; the sequence is MARFGEAVVVGRPGSGDGDSDQSRNRQGTPVPASGPAAAY. Topologically, residues 1–90 are cytoplasmic; that stretch reads MARFGEAVVV…KYAKKLIDWP (90 aa). Residues Ser15 and Ser20 each carry the phosphoserine modification. The I repeat unit spans residues 77 to 355; that stretch reads NIVRKYAKKL…LVLGVLSGEF (279 aa). A helical membrane pass occupies residues 91 to 109; the sequence is PFEYMILATIIANCIVLAL. The Extracellular segment spans residues 110-128; sequence EQHLPEDDKTPMSRRLEKT. A helical membrane pass occupies residues 129 to 147; the sequence is EPYFIGIFCFEAGIKIVAL. The Cytoplasmic segment spans residues 148 to 159; it reads GFIFHKGSYLRN. The helical transmembrane segment at 160–174 threads the bilayer; that stretch reads GWNVMDFIVVLSGIL. The Extracellular segment spans residues 175-186; sequence ATAGTHFNTHVD. Residues 187–206 form a helical membrane-spanning segment; that stretch reads LRALRAVRVLRPLKLVSGIP. The Cytoplasmic segment spans residues 207–224; the sequence is SLQIVLKSIMKAMVPLLQ. The helical transmembrane segment at 225–245 threads the bilayer; that stretch reads IGLLLFFAILMFAIIGLEFYS. The Extracellular portion of the chain corresponds to 246–327; sequence GKLHRACFMN…NTNDALGATW (82 aa). The N-linked (GlcNAc...) asparagine glycan is linked to Asn255. Residues 328-351 form a helical membrane-spanning segment; it reads NWLYFIPLIIIGSFFVLNLVLGVL. The Cytoplasmic portion of the chain corresponds to 352-477; sequence SGEFAKERER…ISIRHMVKSQ (126 aa). The interval 375-392 is binding to the beta subunit; sequence QQIERELNGYRAWIDKAE. Asp427 is a Ca(2+) binding site. Ser428 is modified (phosphoserine). Positions 429, 431, 433, and 438 each coordinate Ca(2+). The residue at position 441 (Thr441) is a Phosphothreonine. The stretch at 463 to 707 is one II repeat; sequence ERLLRISIRH…VFLAIAVDNL (245 aa). Residues 478–497 traverse the membrane as a helical segment; the sequence is VFYWIVLSVVALNTACVAIV. The Extracellular segment spans residues 498–510; that stretch reads HHNQPQWLTHLLY. The helical transmembrane segment at 511–530 threads the bilayer; it reads YAEFLFLGLFLLEMSLKMYG. Topologically, residues 531–539 are cytoplasmic; the sequence is MGPRLYFHS. Residues 540-558 traverse the membrane as a helical segment; sequence SFNCFDFGVTVGSIFEVVW. Residues 559 to 568 lie on the Extracellular side of the membrane; sequence AIFRPGTSFG. Residues 569 to 587 form a helical membrane-spanning segment; it reads ISVLRALRLLRIFKITKYW. At 588–606 the chain is on the cytoplasmic side; sequence ASLRNLVVSLMSSMKSIIS. Residues 607–626 traverse the membrane as a helical segment; sequence LLFLLFLFIVVFALLGMQLF. The Extracellular portion of the chain corresponds to 627 to 679; sequence GGRFNFNDGTPSANFDTFPAAIMTVFQILTGEDWNEVMYNGIRSQGGVSSGMW. A helical membrane pass occupies residues 680-704; it reads SAIYFIVLTLFGNYTLLNVFLAIAV. Topologically, residues 705–1150 are cytoplasmic; sequence DNLANAQELT…TTNPIRRACH (446 aa). Residues 730 to 777 are disordered; it reads LQKAKEVSPMSAPNMPSIERDRRRRHHMSMWEPRSSHLRERRRRHHMS. Phosphoserine is present on residues Ser737, Ser746, Ser794, Ser816, and Ser856. 2 disordered regions span residues 854 to 994 and 1091 to 1127; these read GGSL…VPRG and SNKT…RETG. Residues 914-927 show a composition bias toward basic residues; the sequence is RHRQSQRRSRHRRV. The segment covering 934–946 has biased composition (low complexity); sequence SASASRSRSASQE. Ser948 carries the post-translational modification Phosphoserine. Composition is skewed to basic and acidic residues over residues 956–985 and 1094–1105; these read EGEK…DLRR and TDGEASPLKEAE. Ser1099 bears the Phosphoserine mark. The III repeat unit spans residues 1143–1429; sequence NPIRRACHYI…IFVALIIITF (287 aa). Residues 1151 to 1167 form a helical membrane-spanning segment; that stretch reads YIVNLRYFEMCILLVIA. At 1168–1191 the chain is on the extracellular side; sequence ASSIALAAEDPVLTNSERNKVLRY. Residues 1192–1211 traverse the membrane as a helical segment; that stretch reads FDYVFTGVFTFEMVIKMIDQ. At 1212 to 1219 the chain is on the cytoplasmic side; that stretch reads GLILQDGS. A helical transmembrane segment spans residues 1220-1242; sequence YFRDLWNILDFVVVVGALVAFAL. The Extracellular segment spans residues 1243 to 1256; sequence ANALGTNKGRDIKT. A helical membrane pass occupies residues 1257 to 1274; it reads IKSLRVLRVLRPLKTIKR. The Cytoplasmic portion of the chain corresponds to 1275-1293; it reads LPKLKAVFDCVVTSLKNVF. A helical transmembrane segment spans residues 1294–1313; sequence NILIVYKLFMFIFAVIAVQL. The Extracellular segment spans residues 1314 to 1400; that stretch reads FKGKFFYCTD…DRGPSRSNRM (87 aa). A helical membrane pass occupies residues 1401-1424; sequence EMSIFYVVYFVVFPFFFVNIFVAL. Over 1425–1481 the chain is Cytoplasmic; it reads IIITFQEQGDKMMEECSLEKNERACIDFAISAKPLTRYMPQNRHTFQYRVWHFVVSP. Residues 1466-1729 form an IV repeat; sequence NRHTFQYRVW…LFVAVIMDNF (264 aa). The chain crosses the membrane as a helical span at residues 1482–1500; the sequence is SFEYTIMAMIALNTVVLMM. Residues 1501–1515 are Extracellular-facing; that stretch reads KYYTAPCTYELALKY. Residues 1516 to 1535 form a helical membrane-spanning segment; sequence LNIAFTMVFSLECVLKVIAF. Residues 1536–1543 are Cytoplasmic-facing; that stretch reads GFLNYFRD. Residues 1544–1562 form a helical membrane-spanning segment; it reads TWNIFDFITVIGSITEIIL. Residues 1563 to 1573 lie on the Extracellular side of the membrane; sequence TDSKLVNTSGF. An N-linked (GlcNAc...) asparagine glycan is attached at Asn1569. A helical membrane pass occupies residues 1574-1592; it reads NMSFLKLFRAARLIKLLRQ. Residues 1593–1611 are Cytoplasmic-facing; sequence GYTIRILLWTFVQSFKALP. Residues 1612–1631 form a helical membrane-spanning segment; sequence YVCLLIAMLFFIYAIIGMQV. Residues 1632 to 1700 are Extracellular-facing; that stretch reads FGNIKLDEES…QNESERCGTD (69 aa). An N-linked (GlcNAc...) asparagine glycan is attached at Asn1692. A helical membrane pass occupies residues 1701–1726; the sequence is LAYVYFVSFIFFCSFLMLNLFVAVIM. Over 1727–2272 the chain is Cytoplasmic; sequence DNFEYLTRDS…LSDTEEDDKC (546 aa). Residues 1742–1777 enclose the EF-hand domain; that stretch reads HHLDEFVRVWAEYDRAACGRIHYTEMYEMLTLMSPP. Ca(2+)-binding residues include Asp1755, Arg1761, and Glu1766. The disordered stretch occupies residues 2021–2186; that stretch reads SAHRLNSDSG…QQGQHPSPQH (166 aa). The span at 2025–2045 shows a compositional bias: basic and acidic residues; it reads LNSDSGHKSDTHRSGGRERGR. A phosphoserine mark is found at Ser2054 and Ser2073. Residues 2061 to 2078 show a composition bias toward basic and acidic residues; that stretch reads NSEERGTQADWESPERRQ. The span at 2097–2112 shows a compositional bias: low complexity; the sequence is SLSESSIPSISDTSTP. Residues 2155 to 2174 show a composition bias toward polar residues; sequence LASQALESNSACLTESSNSL. Residues 2175–2186 show a composition bias toward low complexity; that stretch reads HPQQGQHPSPQH.

It belongs to the calcium channel alpha-1 subunit (TC 1.A.1.11) family. CACNA1E subfamily. Interacts with EFHC1. Voltage-dependent calcium channels are multisubunit complexes, consisting of alpha-1, alpha-2, beta and delta subunits in a 1:1:1:1 ratio. The channel activity is directed by the pore-forming and voltage-sensitive alpha-1 subunit. In many cases, this subunit is sufficient to generate voltage-sensitive calcium channel activity. The auxiliary subunits beta and alpha-2/delta linked by a disulfide bridge regulate the channel activity. In terms of tissue distribution, expressed in neuronal tissues, retina, spleen, and pancreatic islet cells.

The protein resides in the membrane. It carries out the reaction Ca(2+)(in) = Ca(2+)(out). In terms of biological role, voltage-sensitive calcium channels (VSCC) mediate the entry of calcium ions into excitable cells and are also involved in a variety of calcium-dependent processes, including muscle contraction, hormone or neurotransmitter release, gene expression, cell motility, cell division and cell death. The isoform alpha-1E gives rise to R-type calcium currents. R-type calcium channels belong to the 'high-voltage activated' (HVA) group and are blocked by nickel. They are however insensitive to dihydropyridines (DHP). Calcium channels containing alpha-1E subunit could be involved in the modulation of firing patterns of neurons which is important for information processing. The protein is Voltage-dependent R-type calcium channel subunit alpha-1E (Cacna1e) of Mus musculus (Mouse).